Reading from the N-terminus, the 901-residue chain is HTH-type transcriptional regulator MalT (901 aa).

ATP is bound at residue 39–46; the sequence is SPAGYGKT. In terms of domain architecture, HTH luxR-type spans 829–894; sequence ELIRTSPLTQ…AAVQHAQKLL (66 aa). The H-T-H motif DNA-binding region spans 853–872; that stretch reads NEQIAGELEVAATTIKTHIR.

This sequence belongs to the MalT family. In terms of assembly, monomer in solution. Oligomerizes to an active state in the presence of the positive effectors ATP and maltotriose.

Its activity is regulated as follows. Activated by ATP and maltotriose, which are both required for DNA binding. Functionally, positively regulates the transcription of the maltose regulon whose gene products are responsible for uptake and catabolism of malto-oligosaccharides. Specifically binds to the promoter region of its target genes, recognizing a short DNA motif called the MalT box. This Escherichia coli O6:K15:H31 (strain 536 / UPEC) protein is HTH-type transcriptional regulator MalT.